The chain runs to 150 residues: MAAYLLAVAILFCIQGWPSGTVQGEVRPFMEVYQRSVCQPRETLVSILEEYPDKISKIFRPSCVAVLRCGGCCSDESLTCTSVGERTVELQVMQVTPKTLSSKIKVMKFREHTACECRPRSGSRVNIGKHKRSPEEGEREPSSPLTPGSL.

A signal peptide spans 1 to 24 (MAAYLLAVAILFCIQGWPSGTVQG). Pyrrolidone carboxylic acid (Glu) is present on glutamate 25. 3 disulfide bridges follow: cysteine 38–cysteine 80, cysteine 69–cysteine 115, and cysteine 73–cysteine 117. A disordered region spans residues 119 to 150 (PRSGSRVNIGKHKRSPEEGEREPSSPLTPGSL). The propeptide occupies 122–150 (GSRVNIGKHKRSPEEGEREPSSPLTPGSL).

The protein belongs to the PDGF/VEGF growth factor family. Snake venom VEGF subfamily. In terms of assembly, homodimer; disulfide-linked. Interacts with high affinity with VEGF receptor-2 (KDR), and with a lower affinity with VEGF receptor-1 (FLT1). Does not bind VEGF receptor-3 (FLT4) and neuropilin-1 (NRP1). In terms of tissue distribution, expressed by the venom gland.

Its subcellular location is the secreted. Snake venom VEGFs that may contribute to venom dispersion and prey subjugation by inducing vascular permeability and hypotension. This protein induces an increase in capillary permeability after intradermal injection, as well as a drastic hypotensive effect after intravenous injection. The hypotension is mediated by nitric oxide (NO), which is produced by VEGF-activated endothelium NO synthase. Also induces angiogenesis in vitro, probably through VEGF receptor (KDR/VEGFR-2) signaling. This Bitis arietans (African puff adder) protein is Snake venom vascular endothelial growth factor toxin barietin.